The chain runs to 235 residues: Phosphoribosylaminoimidazole-succinocarboxamide synthase (235 aa).

The protein belongs to the SAICAR synthetase family.

The catalysed reaction is 5-amino-1-(5-phospho-D-ribosyl)imidazole-4-carboxylate + L-aspartate + ATP = (2S)-2-[5-amino-1-(5-phospho-beta-D-ribosyl)imidazole-4-carboxamido]succinate + ADP + phosphate + 2 H(+). It participates in purine metabolism; IMP biosynthesis via de novo pathway; 5-amino-1-(5-phospho-D-ribosyl)imidazole-4-carboxamide from 5-amino-1-(5-phospho-D-ribosyl)imidazole-4-carboxylate: step 1/2. This is Phosphoribosylaminoimidazole-succinocarboxamide synthase from Chlorobium chlorochromatii (strain CaD3).